Here is a 123-residue protein sequence, read N- to C-terminus: uncharacterized protein (123 aa).

This is an uncharacterized protein from Methanocaldococcus jannaschii (strain ATCC 43067 / DSM 2661 / JAL-1 / JCM 10045 / NBRC 100440) (Methanococcus jannaschii).